Reading from the N-terminus, the 102-residue chain is MNAIPLEHGLALASVLFALGLVGLMVRRNILFVLMSLEVMMNAAALAFVVAGSRWGQPDGQVMFILVLSLAAAEASIGLAILLQLYRRFHTLDIDAASEMRG.

3 consecutive transmembrane segments (helical) span residues 6-26 (LEHG…GLMV), 30-50 (ILFV…AFVV), and 62-82 (VMFI…LAIL).

This sequence belongs to the complex I subunit 4L family. In terms of assembly, NDH-1 is composed of 13 different subunits. Subunits NuoA, H, J, K, L, M, N constitute the membrane sector of the complex.

It is found in the cell inner membrane. The catalysed reaction is a quinone + NADH + 5 H(+)(in) = a quinol + NAD(+) + 4 H(+)(out). NDH-1 shuttles electrons from NADH, via FMN and iron-sulfur (Fe-S) centers, to quinones in the respiratory chain. The immediate electron acceptor for the enzyme in this species is believed to be ubiquinone. Couples the redox reaction to proton translocation (for every two electrons transferred, four hydrogen ions are translocated across the cytoplasmic membrane), and thus conserves the redox energy in a proton gradient. The protein is NADH-quinone oxidoreductase subunit K of Pseudomonas aeruginosa (strain LESB58).